Reading from the N-terminus, the 239-residue chain is DNA repair protein RecO (239 aa).

Belongs to the RecO family.

In terms of biological role, involved in DNA repair and RecF pathway recombination. In Bifidobacterium animalis subsp. lactis (strain AD011), this protein is DNA repair protein RecO.